Here is a 152-residue protein sequence, read N- to C-terminus: UPF0178 protein NIS_0137 (152 aa).

The protein belongs to the UPF0178 family.

The chain is UPF0178 protein NIS_0137 from Nitratiruptor sp. (strain SB155-2).